We begin with the raw amino-acid sequence, 655 residues long: p-hydroxybenzoic acid efflux pump subunit AaeB (655 aa).

The Periplasmic portion of the chain corresponds to 1–12; that stretch reads MGIFSIANQHIR. Residues 13–33 traverse the membrane as a helical segment; the sequence is FAVKLACAIVLALFIGFHFQL. The Cytoplasmic portion of the chain corresponds to 34–37; it reads ETPR. The chain crosses the membrane as a helical span at residues 38 to 58; it reads WAVLTAAIVAAGPAFAAGGEP. Over 59 to 68 the chain is Periplasmic; it reads YSGAIRYRGM. A helical transmembrane segment spans residues 69–89; sequence LRIIGTFIGCIAALIIIISMI. Residues 90–92 lie on the Cytoplasmic side of the membrane; sequence RAP. A helical transmembrane segment spans residues 93–113; that stretch reads LLMILVCCVWVGFCTWISSLV. Topologically, residues 114–120 are periplasmic; it reads RIENSYA. A helical membrane pass occupies residues 121–141; that stretch reads WGLSGYTALIIVITIQTEPLL. The Cytoplasmic portion of the chain corresponds to 142–151; the sequence is TPQFALERCS. The chain crosses the membrane as a helical span at residues 152–172; sequence EIVIGIGCAILADLLFSPRSI. At 173–369 the chain is on the periplasmic side; the sequence is KQEVDRELDS…RTTLSCILGT (197 aa). Residues 370-390 traverse the membrane as a helical segment; it reads LFWLWTGWTSGNGEMVMIAVV. Over 391 to 406 the chain is Cytoplasmic; sequence TSLAMRLPNPRMVCID. Residues 407-427 form a helical membrane-spanning segment; that stretch reads FIYGTLAALPLGLLYFLVIIP. Over 428–430 the chain is Periplasmic; sequence NTQ. Residues 431 to 451 traverse the membrane as a helical segment; that stretch reads QSMLLLCLSLAVLGFFIGIEV. The Cytoplasmic portion of the chain corresponds to 452-458; that stretch reads QKRRLGS. A helical membrane pass occupies residues 459 to 479; that stretch reads MGALASTINIIVLDNPMTFHF. Topologically, residues 480–481 are periplasmic; the sequence is SQ. A helical membrane pass occupies residues 482–502; sequence FLDSALGQIVGCMLAFIVILL. Topologically, residues 503–655 are cytoplasmic; sequence VRDKSKDRTG…HKYQNALTDS (153 aa).

This sequence belongs to the aromatic acid exporter ArAE (TC 2.A.85) family.

The protein localises to the cell inner membrane. Forms an efflux pump with AaeA. Could function as a metabolic relief valve, allowing to eliminate certain compounds when they accumulate to high levels in the cell. The chain is p-hydroxybenzoic acid efflux pump subunit AaeB from Salmonella paratyphi A (strain ATCC 9150 / SARB42).